A 62-amino-acid polypeptide reads, in one-letter code: Large ribosomal subunit protein uL29 (62 aa).

This sequence belongs to the universal ribosomal protein uL29 family.

In Vesicomyosocius okutanii subsp. Calyptogena okutanii (strain HA), this protein is Large ribosomal subunit protein uL29.